The sequence spans 922 residues: Non-centrosomal microtubule array protein 1 (922 aa).

The span at 1–10 shows a compositional bias: polar residues; it reads MSNERVSTGS. Disordered stretches follow at residues 1-134, 250-277, 465-491, and 533-563; these read MSNE…HLPP, PVRLRKRGDTSRRDAVEAGFEPRDTVPR, KSRHLSESRDEMRGGAERRGSGGQMNL, and TQKEQSSHSTPSQSRHSSSKSSHFNGSSNLS. Basic and acidic residues-rich tracts occupy residues 43 to 54 and 70 to 94; these read SMERKDMPDRPK and PKDRSSDSGDGDSPRPRKFSSKECA. Positions 99–113 are enriched in low complexity; that stretch reads SNTSSEHSSRSNSST. Basic and acidic residues-rich tracts occupy residues 256-276 and 468-484; these read RGDTSRRDAVEAGFEPRDTVP and HLSESRDEMRGGAERRG. The segment covering 539-563 has biased composition (low complexity); it reads SHSTPSQSRHSSSKSSHFNGSSNLS. Residues 564 to 728 are a coiled coil; it reads TSEQLRLQEM…RSVSTLRLEQ (165 aa).

It is found in the cytoplasm. It localises to the cytoskeleton. The protein resides in the apical cell membrane. Its subcellular location is the cell junction. The protein localises to the hemidesmosome. It is found in the adherens junction. Plays a role in the assembly of microtubule arrays in the germline acting redundantly with ptrn-1 to control circumferential microtubule assembly along the body which is necessary for larval development, viability, and morphology and integrity of the epidermis. Required for microtubule stability and anchorage by binding to microtubule minus ends. Recruited to hemidesomosomes in early embryonic elongation to direct the nucleation and growth of non-centrosomal microtubules. Its function is as follows. Required for normal nuclear migration in the embryonic epidermis. In terms of biological role, directs the assembly of non-centrosomal microtubule arrays that determine the position of nuclei within intracellular compartments in the epidermis and this is independent of ptrn-1 activity. In Caenorhabditis elegans, this protein is Non-centrosomal microtubule array protein 1.